The chain runs to 271 residues: Formamidopyrimidine-DNA glycosylase (271 aa).

The Schiff-base intermediate with DNA role is filled by Pro-2. The Proton donor role is filled by Glu-3. Lys-57 acts as the Proton donor; for beta-elimination activity in catalysis. His-90, Arg-109, and Lys-151 together coordinate DNA. The FPG-type zinc-finger motif lies at 236–270 (HVYGRGGETCTECGHLLSEIRLGQRTTVFCSLCQT). Catalysis depends on Arg-260, which acts as the Proton donor; for delta-elimination activity.

Belongs to the FPG family. In terms of assembly, monomer. Zn(2+) is required as a cofactor.

The catalysed reaction is Hydrolysis of DNA containing ring-opened 7-methylguanine residues, releasing 2,6-diamino-4-hydroxy-5-(N-methyl)formamidopyrimidine.. The enzyme catalyses 2'-deoxyribonucleotide-(2'-deoxyribose 5'-phosphate)-2'-deoxyribonucleotide-DNA = a 3'-end 2'-deoxyribonucleotide-(2,3-dehydro-2,3-deoxyribose 5'-phosphate)-DNA + a 5'-end 5'-phospho-2'-deoxyribonucleoside-DNA + H(+). In terms of biological role, involved in base excision repair of DNA damaged by oxidation or by mutagenic agents. Acts as a DNA glycosylase that recognizes and removes damaged bases. Has a preference for oxidized purines, such as 7,8-dihydro-8-oxoguanine (8-oxoG). Has AP (apurinic/apyrimidinic) lyase activity and introduces nicks in the DNA strand. Cleaves the DNA backbone by beta-delta elimination to generate a single-strand break at the site of the removed base with both 3'- and 5'-phosphates. This is Formamidopyrimidine-DNA glycosylase from Shewanella amazonensis (strain ATCC BAA-1098 / SB2B).